A 478-amino-acid polypeptide reads, in one-letter code: Ribulose bisphosphate carboxylase large chain (478 aa).

A propeptide spanning residues M1–S2 is cleaved from the precursor. N123 and T173 together coordinate substrate. K175 (proton acceptor) is an active-site residue. K177 is a substrate binding site. K201, D203, and E204 together coordinate Mg(2+). K201 is modified (N6-carboxylysine). The residue at position 208 (S208) is a Phosphoserine. The Proton acceptor role is filled by H294. Positions 295 and 327 each coordinate substrate. T330 bears the Phosphothreonine mark. S379 provides a ligand contact to substrate.

It belongs to the RuBisCO large chain family. Type I subfamily. Heterohexadecamer of 8 large chains and 8 small chains; disulfide-linked. The disulfide link is formed within the large subunit homodimers. The cofactor is Mg(2+). In terms of processing, the disulfide bond which can form in the large chain dimeric partners within the hexadecamer appears to be associated with oxidative stress and protein turnover.

The protein resides in the plastid. Its subcellular location is the chloroplast. The enzyme catalyses 2 (2R)-3-phosphoglycerate + 2 H(+) = D-ribulose 1,5-bisphosphate + CO2 + H2O. It carries out the reaction D-ribulose 1,5-bisphosphate + O2 = 2-phosphoglycolate + (2R)-3-phosphoglycerate + 2 H(+). Functionally, ruBisCO catalyzes two reactions: the carboxylation of D-ribulose 1,5-bisphosphate, the primary event in carbon dioxide fixation, as well as the oxidative fragmentation of the pentose substrate in the photorespiration process. Both reactions occur simultaneously and in competition at the same active site. The chain is Ribulose bisphosphate carboxylase large chain from Lepidium virginicum (Virginia pepperweed).